Reading from the N-terminus, the 289-residue chain is Shikimate dehydrogenase (NADP(+)) (289 aa).

Residues 19–21 (SLS) and threonine 66 contribute to the shikimate site. Lysine 70 functions as the Proton acceptor in the catalytic mechanism. Asparagine 91 and aspartate 106 together coordinate shikimate. NADP(+) contacts are provided by residues 131 to 135 (GNGGA) and leucine 229. Tyrosine 231 lines the shikimate pocket. An NADP(+)-binding site is contributed by glycine 252.

It belongs to the shikimate dehydrogenase family. Homodimer.

It carries out the reaction shikimate + NADP(+) = 3-dehydroshikimate + NADPH + H(+). It functions in the pathway metabolic intermediate biosynthesis; chorismate biosynthesis; chorismate from D-erythrose 4-phosphate and phosphoenolpyruvate: step 4/7. Functionally, involved in the biosynthesis of the chorismate, which leads to the biosynthesis of aromatic amino acids. Catalyzes the reversible NADPH linked reduction of 3-dehydroshikimate (DHSA) to yield shikimate (SA). This chain is Shikimate dehydrogenase (NADP(+)), found in Trichormus variabilis (strain ATCC 29413 / PCC 7937) (Anabaena variabilis).